The following is a 1186-amino-acid chain: Trafficking protein particle complex II-specific subunit 120 homolog (1186 aa).

Disordered stretches follow at residues 777-824 (PTDS…EKES) and 964-984 (TKDP…SEKN). The segment covering 779–792 (DSDNTMSSGRNAAG) has biased composition (polar residues). Serine 971 is subject to Phosphoserine. Over residues 972–981 (PSSSRNPSFS) the composition is skewed to low complexity.

This sequence belongs to the TRS120 family. Part of the multisubunit TRAPP (transport protein particle) II complex composed of BET3, BET5, TRS20, TRS23, TRS31, TRS33, TRS65, TRS85, TRS120 and TRS130. In terms of tissue distribution, expressed in roots, leaves, stems and flowers.

It localises to the golgi apparatus. The protein resides in the trans-Golgi network. Its subcellular location is the early endosome. Specific subunit of the TRAPP II complex, a highly conserved vesicle tethering complex that is required for the proper transport of proteins in post-Golgi trafficking pathways to the growing cell plate in mitotic active cells. Required for the polarized and selective transport of PIN2 and probably PIN1 to the plasma membrane. Not required for ER-to-Golgi as well as biosynthetic and endocytic vacuolar transport. This is Trafficking protein particle complex II-specific subunit 120 homolog from Arabidopsis thaliana (Mouse-ear cress).